The sequence spans 370 residues: Phosphate-binding protein PstS 2 (370 aa).

The signal sequence occupies residues 1–22 (MKFARSGAAVSLLAAGTLVLTA). Cys23 is lipidated: N-palmitoyl cysteine. Cys23 is lipidated: S-diacylglycerol cysteine. Residues 54–56 (STA), Ser84, Asp102, and 191–193 (SGT) each bind phosphate.

Belongs to the PstS family. The complex is composed of two ATP-binding proteins (PstB), two transmembrane proteins (PstC and PstA) and a solute-binding protein (PstS).

It localises to the cell membrane. Functions in inorganic phosphate uptake, although probably not the main uptake protein under phosphate starvation. Part of the ABC transporter complex PstSACB involved in phosphate import. The polypeptide is Phosphate-binding protein PstS 2 (pstS2) (Mycobacterium tuberculosis (strain ATCC 25618 / H37Rv)).